The primary structure comprises 311 residues: Coproporphyrin III ferrochelatase 1 (311 aa).

Fe-coproporphyrin III is bound by residues Tyr-12, Arg-29, 45–46 (RY), Ser-53, and Tyr-124. Fe(2+)-binding residues include His-182 and Glu-263.

This sequence belongs to the ferrochelatase family.

The protein localises to the cytoplasm. It carries out the reaction Fe-coproporphyrin III + 2 H(+) = coproporphyrin III + Fe(2+). The protein operates within porphyrin-containing compound metabolism; protoheme biosynthesis. Functionally, involved in coproporphyrin-dependent heme b biosynthesis. Catalyzes the insertion of ferrous iron into coproporphyrin III to form Fe-coproporphyrin III. The protein is Coproporphyrin III ferrochelatase 1 of Bacillus thuringiensis subsp. konkukian (strain 97-27).